Consider the following 465-residue polypeptide: tRNA (guanine(37)-N(1))-methyltransferase (465 aa).

The N-terminal 20 residues, M1–A20, are a transit peptide targeting the mitochondrion. S-adenosyl-L-methionine is bound by residues H238 and D304–G305. The segment at A326–V345 is disordered. N359 contributes to the S-adenosyl-L-methionine binding site.

Belongs to the class I-like SAM-binding methyltransferase superfamily. TRM5/TYW2 family. As to quaternary structure, monomer.

Its subcellular location is the mitochondrion matrix. The protein localises to the nucleus. It is found in the cytoplasm. The enzyme catalyses guanosine(37) in tRNA + S-adenosyl-L-methionine = N(1)-methylguanosine(37) in tRNA + S-adenosyl-L-homocysteine + H(+). Its function is as follows. Specifically methylates the N1 position of guanosine-37 in various cytoplasmic and mitochondrial tRNAs. Methylation is not dependent on the nature of the nucleoside 5' of the target nucleoside. This is the first step in the biosynthesis of wybutosine (yW), a modified base adjacent to the anticodon of tRNAs and required for accurate decoding. This chain is tRNA (guanine(37)-N(1))-methyltransferase, found in Fusarium vanettenii (strain ATCC MYA-4622 / CBS 123669 / FGSC 9596 / NRRL 45880 / 77-13-4) (Fusarium solani subsp. pisi).